Consider the following 273-residue polypeptide: ATP synthase subunit a (273 aa).

7 helical membrane-spanning segments follow: residues 34-54, 94-114, 115-135, 143-163, 171-191, 218-238, and 244-264; these read IINM…CLFM, FIAP…SLDF, LPVD…LITH, DLNG…FYNI, FVHE…NLLL, FLLI…GHVV, and AIFH…LTLV.

This sequence belongs to the ATPase A chain family. As to quaternary structure, F-type ATPases have 2 components, CF(1) - the catalytic core - and CF(0) - the membrane proton channel. CF(1) has five subunits: alpha(3), beta(3), gamma(1), delta(1), epsilon(1). CF(0) has three main subunits: a(1), b(2) and c(9-12). The alpha and beta chains form an alternating ring which encloses part of the gamma chain. CF(1) is attached to CF(0) by a central stalk formed by the gamma and epsilon chains, while a peripheral stalk is formed by the delta and b chains.

It is found in the cell inner membrane. Its function is as follows. Key component of the proton channel; it plays a direct role in the translocation of protons across the membrane. The sequence is that of ATP synthase subunit a from Janthinobacterium sp. (strain Marseille) (Minibacterium massiliensis).